Here is a 509-residue protein sequence, read N- to C-terminus: ATP synthase subunit alpha (509 aa).

An ATP-binding site is contributed by 169–176 (GDRKTGKT).

The protein belongs to the ATPase alpha/beta chains family. F-type ATPases have 2 components, CF(1) - the catalytic core - and CF(0) - the membrane proton channel. CF(1) has five subunits: alpha(3), beta(3), gamma(1), delta(1), epsilon(1). CF(0) has three main subunits: a(1), b(2) and c(9-12). The alpha and beta chains form an alternating ring which encloses part of the gamma chain. CF(1) is attached to CF(0) by a central stalk formed by the gamma and epsilon chains, while a peripheral stalk is formed by the delta and b chains.

It is found in the cell membrane. The enzyme catalyses ATP + H2O + 4 H(+)(in) = ADP + phosphate + 5 H(+)(out). In terms of biological role, produces ATP from ADP in the presence of a proton gradient across the membrane. The alpha chain is a regulatory subunit. The polypeptide is ATP synthase subunit alpha (Limosilactobacillus reuteri (strain DSM 20016) (Lactobacillus reuteri)).